The following is a 291-amino-acid chain: 5-hydroxytryptamine receptor 1D (291 aa).

Residues 30 to 54 traverse the membrane as a helical segment; sequence LCDIWLSSDITCCTASILHLCVIAL. A disulfide bridge connects residues Cys31 and Cys108. The serotonin site is built by Asp38 and Cys42. A DRY motif; important for ligand-induced conformation changes motif is present at residues 55-57; that stretch reads DRY. Residues 75-96 traverse the membrane as a helical segment; it reads AAAMIAIVWAISICISIPPLFW. N-linked (GlcNAc...) asparagine glycosylation is present at Asn111. A run of 3 helical transmembrane segments spans residues 115–138, 221–246, and 256–279; these read ISYT…ILYG, KTLG…VLPI, and ALFD…YTVF. Ser241 contributes to the serotonin binding site. The NPxxY motif; important for ligand-induced conformation changes and signaling motif lies at 272-276; that stretch reads NPIIY.

Belongs to the G-protein coupled receptor 1 family. In terms of assembly, homodimer. Heterodimer with HTR1B.

Its subcellular location is the cell membrane. Its function is as follows. G-protein coupled receptor for 5-hydroxytryptamine (serotonin). Also functions as a receptor for ergot alkaloid derivatives, various anxiolytic and antidepressant drugs and other psychoactive substances. Ligand binding causes a conformation change that triggers signaling via guanine nucleotide-binding proteins (G proteins) and modulates the activity of downstream effectors, such as adenylate cyclase. HTR1D is coupled to G(i)/G(o) G alpha proteins and mediates inhibitory neurotransmission by inhibiting adenylate cyclase activity. Regulates the release of 5-hydroxytryptamine in the brain, and thereby affects neural activity. May also play a role in regulating the release of other neurotransmitters. May play a role in vasoconstriction. This chain is 5-hydroxytryptamine receptor 1D (HTR1D), found in Sus scrofa (Pig).